Consider the following 438-residue polypeptide: Exosome complex component RRP45 (438 aa).

S65 bears the Phosphoserine mark. N6-acetyllysine; alternate is present on K297. K297 participates in a covalent cross-link: Glycyl lysine isopeptide (Lys-Gly) (interchain with G-Cter in SUMO1); alternate. Residue K297 forms a Glycyl lysine isopeptide (Lys-Gly) (interchain with G-Cter in SUMO2); alternate linkage. S306 and S346 each carry phosphoserine. Disordered stretches follow at residues 337–365 (AQIG…GGID) and 377–438 (TGEV…RTAN). Acidic residues predominate over residues 349–364 (DLEDSEKEEEEEEGGI). Phosphoserine is present on residues S393 and S395. The segment covering 427 to 438 (QGKRKKKKRTAN) has biased composition (basic residues).

The protein belongs to the RNase PH family. In terms of assembly, component of the RNA exosome core complex (Exo-9), composed of EXOSC1, EXOSC2, EXOSC3, EXOSC4, EXOSC5, EXOSC6, EXOSC7, EXOSC8 and EXOSC9; within the complex interacts with EXOSC3, EXOSC4, EXOSC5 and DIS3. The catalytically inactive RNA exosome core complex (Exo-9) associates with the catalytic subunit EXOSC10/RRP6. Exo-9 may associate with DIS3 to form the nucleolar exosome complex, or DIS3L to form the cytoplasmic exosome complex. Exo-9 is formed by a hexameric base ring consisting of the heterodimers EXOSC4-EXOSC9, EXOSC5-EXOSC8 and EXOSC6-EXOSC7, and a cap ring consisting of EXOSC1, EXOSC2 and EXOSC3. The RNA exosome complex associates with cofactors C1D/RRP47, MPHOSPH6/MPP6 and MTREX/MTR4. Interacts (via C-terminus region) with SETX (via N-terminus domain); the interaction enhances SETX sumoylation. Interacts with DIS3; the interaction is direct.

It is found in the cytoplasm. The protein resides in the nucleus. The protein localises to the nucleolus. It localises to the nucleoplasm. Functionally, non-catalytic component of the RNA exosome complex which has 3'-&gt;5' exoribonuclease activity and participates in a multitude of cellular RNA processing and degradation events. In the nucleus, the RNA exosome complex is involved in proper maturation of stable RNA species such as rRNA, snRNA and snoRNA, in the elimination of RNA processing by-products and non-coding 'pervasive' transcripts, such as antisense RNA species and promoter-upstream transcripts (PROMPTs), and of mRNAs with processing defects, thereby limiting or excluding their export to the cytoplasm. The RNA exosome may be involved in Ig class switch recombination (CSR) and/or Ig variable region somatic hypermutation (SHM) by targeting AICDA deamination activity to transcribed dsDNA substrates. In the cytoplasm, the RNA exosome complex is involved in general mRNA turnover and specifically degrades inherently unstable mRNAs containing AU-rich elements (AREs) within their 3' untranslated regions, and in RNA surveillance pathways, preventing translation of aberrant mRNAs. It seems to be involved in degradation of histone mRNA. The catalytic inactive RNA exosome core complex of 9 subunits (Exo-9) is proposed to play a pivotal role in the binding and presentation of RNA for ribonucleolysis, and to serve as a scaffold for the association with catalytic subunits and accessory proteins or complexes. EXOSC9 binds to ARE-containing RNAs. This Mus musculus (Mouse) protein is Exosome complex component RRP45 (Exosc9).